The sequence spans 339 residues: Phosphatidylglycerol--prolipoprotein diacylglyceryl transferase (339 aa).

Transmembrane regions (helical) follow at residues 43–63 (FTIA…YWLG), 81–101 (ILWM…LTSW), and 121–141 (NGGI…IYFA). Arg167 contacts a 1,2-diacyl-sn-glycero-3-phospho-(1'-sn-glycerol). A run of 2 helical transmembrane segments spans residues 231 to 251 (FTQL…YFWL) and 300 to 320 (LWTD…WMLW).

It belongs to the Lgt family.

It is found in the cell membrane. It catalyses the reaction L-cysteinyl-[prolipoprotein] + a 1,2-diacyl-sn-glycero-3-phospho-(1'-sn-glycerol) = an S-1,2-diacyl-sn-glyceryl-L-cysteinyl-[prolipoprotein] + sn-glycerol 1-phosphate + H(+). The protein operates within protein modification; lipoprotein biosynthesis (diacylglyceryl transfer). Functionally, catalyzes the transfer of the diacylglyceryl group from phosphatidylglycerol to the sulfhydryl group of the N-terminal cysteine of a prolipoprotein, the first step in the formation of mature lipoproteins. In Deinococcus radiodurans (strain ATCC 13939 / DSM 20539 / JCM 16871 / CCUG 27074 / LMG 4051 / NBRC 15346 / NCIMB 9279 / VKM B-1422 / R1), this protein is Phosphatidylglycerol--prolipoprotein diacylglyceryl transferase.